The following is a 476-amino-acid chain: Probable rhodanese domain-containing dual specificity protein phosphatase (476 aa).

In terms of domain architecture, Rhodanese spans 32–190 (IGSSKIIIDL…FQKDYSFMCN (159 aa)). The 143-residue stretch at 208 to 350 (YPSEIIKDFL…LKDYQQHLTL (143 aa)) folds into the Tyrosine-protein phosphatase domain. Cys-294 (phosphocysteine intermediate) is an active-site residue. The span at 425 to 436 (KTTTSSTTINNK) shows a compositional bias: low complexity. The disordered stretch occupies residues 425–476 (KTTTSSTTINNKGQQQDKAQEEKDSIFSYADKQEKMTHPTLHSPIELPQSSL). Residues 442-461 (KAQEEKDSIFSYADKQEKMT) are compositionally biased toward basic and acidic residues.

This sequence belongs to the protein-tyrosine phosphatase family. Non-receptor class dual specificity subfamily.

The catalysed reaction is O-phospho-L-tyrosyl-[protein] + H2O = L-tyrosyl-[protein] + phosphate. It carries out the reaction O-phospho-L-seryl-[protein] + H2O = L-seryl-[protein] + phosphate. The enzyme catalyses O-phospho-L-threonyl-[protein] + H2O = L-threonyl-[protein] + phosphate. Has a dual specificity toward Ser/Thr and Tyr-containing proteins. This is Probable rhodanese domain-containing dual specificity protein phosphatase from Dictyostelium discoideum (Social amoeba).